The sequence spans 903 residues: Probable dipeptidyl-aminopeptidase B (903 aa).

A disordered region spans residues 1–83; that stretch reads MGKFEDDGNS…PLISSGTKTG (83 aa). At 1 to 90 the chain is on the cytoplasmic side; it reads MGKFEDDGNS…KTGSSSRLRK (90 aa). The span at 10–37 shows a compositional bias: polar residues; it reads SESVPLTRQRSESLASQTSTDSGLSIAS. Residues 91-111 traverse the membrane as a helical; Signal-anchor for type II membrane protein segment; the sequence is IVWLLVLLCVGGWVLSFVLFL. The Vacuolar segment spans residues 112–903; it reads TQKRPDTAAL…TANPKPQEST (792 aa). A disordered region spans residues 121–143; sequence LSSASTVEIHEPGPATGGTSHGK. N-linked (GlcNAc...) asparagine glycans are attached at residues asparagine 268, asparagine 349, and asparagine 640. Residue serine 754 is the Charge relay system of the active site. N-linked (GlcNAc...) asparagine glycosylation is present at asparagine 808. Catalysis depends on charge relay system residues aspartate 831 and histidine 864.

This sequence belongs to the peptidase S9B family.

The protein resides in the vacuole membrane. The enzyme catalyses Release of an N-terminal dipeptide, Xaa-Yaa-|-Zaa-, from a polypeptide, preferentially when Yaa is Pro, provided Zaa is neither Pro nor hydroxyproline.. Type IV dipeptidyl-peptidase which removes N-terminal dipeptides sequentially from polypeptides having unsubstituted N-termini provided that the penultimate residue is proline. This chain is Probable dipeptidyl-aminopeptidase B (dapB), found in Penicillium rubens (strain ATCC 28089 / DSM 1075 / NRRL 1951 / Wisconsin 54-1255) (Penicillium chrysogenum).